The primary structure comprises 123 residues: Phosphoribosyl-AMP cyclohydrolase (123 aa).

A Mg(2+)-binding site is contributed by Asp-73. Cys-74 provides a ligand contact to Zn(2+). 2 residues coordinate Mg(2+): Asp-75 and Asp-77. 2 residues coordinate Zn(2+): Cys-90 and Cys-97.

Belongs to the PRA-CH family. As to quaternary structure, homodimer. The cofactor is Mg(2+). Zn(2+) serves as cofactor.

It localises to the cytoplasm. It catalyses the reaction 1-(5-phospho-beta-D-ribosyl)-5'-AMP + H2O = 1-(5-phospho-beta-D-ribosyl)-5-[(5-phospho-beta-D-ribosylamino)methylideneamino]imidazole-4-carboxamide. Its pathway is amino-acid biosynthesis; L-histidine biosynthesis; L-histidine from 5-phospho-alpha-D-ribose 1-diphosphate: step 3/9. In terms of biological role, catalyzes the hydrolysis of the adenine ring of phosphoribosyl-AMP. This chain is Phosphoribosyl-AMP cyclohydrolase, found in Methanoregula boonei (strain DSM 21154 / JCM 14090 / 6A8).